The primary structure comprises 132 residues: Phosphoribosyl-ATP pyrophosphatase (132 aa).

The protein belongs to the PRA-PH family.

The protein localises to the cytoplasm. It carries out the reaction 1-(5-phospho-beta-D-ribosyl)-ATP + H2O = 1-(5-phospho-beta-D-ribosyl)-5'-AMP + diphosphate + H(+). The protein operates within amino-acid biosynthesis; L-histidine biosynthesis; L-histidine from 5-phospho-alpha-D-ribose 1-diphosphate: step 2/9. This Acidovorax sp. (strain JS42) protein is Phosphoribosyl-ATP pyrophosphatase.